Here is a 315-residue protein sequence, read N- to C-terminus: Acetyl-coenzyme A carboxylase carboxyl transferase subunit alpha (315 aa).

Residues 36–289 (LSKKRLELME…RKAVAAELKI (254 aa)) enclose the CoA carboxyltransferase C-terminal domain.

It belongs to the AccA family. In terms of assembly, acetyl-CoA carboxylase is a heterohexamer composed of biotin carboxyl carrier protein (AccB), biotin carboxylase (AccC) and two subunits each of ACCase subunit alpha (AccA) and ACCase subunit beta (AccD).

The protein localises to the cytoplasm. The enzyme catalyses N(6)-carboxybiotinyl-L-lysyl-[protein] + acetyl-CoA = N(6)-biotinyl-L-lysyl-[protein] + malonyl-CoA. It functions in the pathway lipid metabolism; malonyl-CoA biosynthesis; malonyl-CoA from acetyl-CoA: step 1/1. Its function is as follows. Component of the acetyl coenzyme A carboxylase (ACC) complex. First, biotin carboxylase catalyzes the carboxylation of biotin on its carrier protein (BCCP) and then the CO(2) group is transferred by the carboxyltransferase to acetyl-CoA to form malonyl-CoA. The protein is Acetyl-coenzyme A carboxylase carboxyl transferase subunit alpha of Francisella tularensis subsp. tularensis (strain FSC 198).